A 553-amino-acid polypeptide reads, in one-letter code: Putative transport protein YidE (553 aa).

5 helical membrane passes run 4 to 24 (IALTVSILALVAVVGLFIGNV), 28 to 48 (GVGLGIGGVLFGGIIVGHFVS), 65 to 85 (FGLILFVYTIGIQVGPGFFAS), 95 to 115 (LFAVLIVIIGGLVTAILHKLF), and 158 to 178 (MSYAMAYPFGICGILFTMWML). 2 RCK C-terminal domains span residues 191 to 276 (QQHE…VIGQ) and 279 to 361 (DTSL…VLGN). The next 6 helical transmembrane spans lie at 371-391 (MLPVFIGIGLGVLLGSIPVFV), 393-413 (GFPAALKLGLAGGPLIMALIL), 439-459 (IVLFLSVVGLKSGGDFIHTLV), 464-484 (LSWIGYGALITAVPLITVGIL), 493-513 (YLTMCGMLAGSMTDPPALAFA), and 533-553 (LVMFLRIITPQLLAVLFWSIG).

Belongs to the AAE transporter (TC 2.A.81) family. YidE subfamily.

Its subcellular location is the cell membrane. This is Putative transport protein YidE from Escherichia coli O6:K15:H31 (strain 536 / UPEC).